The sequence spans 264 residues: ATP synthase subunit a (264 aa).

6 helical membrane passes run 29–49 (TWHI…LWIF), 90–110 (IAPL…MDMI), 134–154 (DVNI…YYSI), 177–197 (IPVN…SLAL), 208–228 (LIFI…SLGV), and 235–255 (LIFH…LTIV).

It belongs to the ATPase A chain family. In terms of assembly, F-type ATPases have 2 components, CF(1) - the catalytic core - and CF(0) - the membrane proton channel. CF(1) has five subunits: alpha(3), beta(3), gamma(1), delta(1), epsilon(1). CF(0) has three main subunits: a(1), b(2) and c(9-12). The alpha and beta chains form an alternating ring which encloses part of the gamma chain. CF(1) is attached to CF(0) by a central stalk formed by the gamma and epsilon chains, while a peripheral stalk is formed by the delta and b chains.

The protein localises to the cell inner membrane. Its function is as follows. Key component of the proton channel; it plays a direct role in the translocation of protons across the membrane. In Shewanella oneidensis (strain ATCC 700550 / JCM 31522 / CIP 106686 / LMG 19005 / NCIMB 14063 / MR-1), this protein is ATP synthase subunit a.